The chain runs to 662 residues: ATP-dependent zinc metalloprotease YME1 homolog (662 aa).

ATP is bound at residue G206–T213. Residue H425 participates in Zn(2+) binding. Residue E426 is part of the active site. H429 and D503 together coordinate Zn(2+).

The protein in the N-terminal section; belongs to the AAA ATPase family. It in the C-terminal section; belongs to the peptidase M41 family. Zn(2+) is required as a cofactor.

Functionally, putative ATP-dependent protease. In Schistosoma mansoni (Blood fluke), this protein is ATP-dependent zinc metalloprotease YME1 homolog.